Reading from the N-terminus, the 339-residue chain is MSSKFDIGSLSIVMTLLICFLLLSLAPKLEAELATVQHAPNPDGSISFLVIGDWGRHGLYNQSQVALQMGRIGEEMDINFVVSTGDNIYDNGMKSIDDPAFQLSFSNIYTSPSLQKPWYLVLGNHDYRGDVEAQLSPILRSMDSRWICMRSFIVDAEIAELFFVDTTPFVDAYFLSPQDQTYDWSGVSPRKSYLQTILTELEMGLRESSAKWKIVVGHHAIKSASIHGNTKELESLLLPILEANKVDLYMNGHDHCLQHISTSQSPIQFLTSGGGSKAWRGYYNWTTPEDMKFFYDGQGFMSVKITRSELSVVFYDVSGNSLHKWDTSKMLDSDFYFPL.

The signal sequence occupies residues 1–31 (MSSKFDIGSLSIVMTLLICFLLLSLAPKLEA). Asp-53 serves as a coordination point for Fe cation. A glycan (N-linked (GlcNAc...) asparagine) is linked at Asn-61. Residues Asp-86 and Tyr-89 each coordinate Fe cation. Asp-86 is a Zn(2+) binding site. The Zn(2+) site is built by Asn-124 and His-218. His-227 (proton donor) is an active-site residue. His-253 serves as a coordination point for Zn(2+). 253-255 (HDH) serves as a coordination point for substrate. Residue His-255 coordinates Fe cation. Residue Asn-284 is glycosylated (N-linked (GlcNAc...) asparagine).

It belongs to the metallophosphoesterase superfamily. Purple acid phosphatase family. In terms of assembly, homodimer. Fe cation is required as a cofactor. Requires Zn(2+) as cofactor. In terms of tissue distribution, expressed in roots, stems, leaves, flowers and siliques.

Its subcellular location is the secreted. It carries out the reaction a phosphate monoester + H2O = an alcohol + phosphate. The protein is Purple acid phosphatase 4 (PAP4) of Arabidopsis thaliana (Mouse-ear cress).